The primary structure comprises 427 residues: Enolase (427 aa).

Residue Gln-163 coordinates (2R)-2-phosphoglycerate. Glu-205 (proton donor) is an active-site residue. 3 residues coordinate Mg(2+): Asp-242, Glu-285, and Asp-312. (2R)-2-phosphoglycerate-binding residues include Lys-337, Arg-366, Ser-367, and Lys-388. Lys-337 functions as the Proton acceptor in the catalytic mechanism.

It belongs to the enolase family. Mg(2+) serves as cofactor.

It is found in the cytoplasm. It localises to the secreted. Its subcellular location is the cell surface. It carries out the reaction (2R)-2-phosphoglycerate = phosphoenolpyruvate + H2O. It functions in the pathway carbohydrate degradation; glycolysis; pyruvate from D-glyceraldehyde 3-phosphate: step 4/5. Its function is as follows. Catalyzes the reversible conversion of 2-phosphoglycerate (2-PG) into phosphoenolpyruvate (PEP). It is essential for the degradation of carbohydrates via glycolysis. The protein is Enolase of Nitrobacter hamburgensis (strain DSM 10229 / NCIMB 13809 / X14).